We begin with the raw amino-acid sequence, 137 residues long: uncharacterized protein (137 aa).

Residues 1–32 (MRDHLPPGLPPDPFADDPCDPSAALDAVEPGQ) form a disordered region.

This sequence to M.tuberculosis Rv3412.

This is an uncharacterized protein from Mycobacterium leprae (strain TN).